We begin with the raw amino-acid sequence, 70 residues long: MIDYPININNVSGNSVINVGGAFMIRPLTLSKSVFGSGGLNTGIVFENNFVSKAKMINHQFTDQNVTKTF.

Belongs to the GerPA/GerPF family.

The protein is Spore germination protein-like protein YpzD (ypzD) of Bacillus subtilis (strain 168).